A 982-amino-acid polypeptide reads, in one-letter code: Probable DNA-directed RNA polymerase (982 aa).

This sequence belongs to the RNA polymerase beta chain family.

The enzyme catalyses RNA(n) + a ribonucleoside 5'-triphosphate = RNA(n+1) + diphosphate. Its function is as follows. The presence of the two linear plasmids, termed pGKL1 and pGKL2, in strains of Kluyveromyces lactis confers the killer phenotype to the host cell, by promoting the secretion of a toxin able to inhibit the growth of sensitive strains. This chain is Probable DNA-directed RNA polymerase, found in Kluyveromyces lactis (strain ATCC 8585 / CBS 2359 / DSM 70799 / NBRC 1267 / NRRL Y-1140 / WM37) (Yeast).